Consider the following 105-residue polypeptide: uncharacterized protein (105 aa).

2 consecutive transmembrane segments (helical) span residues A56 to I76 and I85 to Y105.

It is found in the membrane. This is an uncharacterized protein from Aedes vexans (Inland floodwater mosquito).